The sequence spans 264 residues: MRQYLDLLEHVITTGTDRGDRTGTGTRSVFGYQMRFDLSQGFPVLTTKKLHLRSIIHELLWFLRGDTNVAYLKDNGVSIWDEWADENGELGPVYGYQWRSWPTPDGRHIDQIAALVEGLKTNPNSRRHIVSAWNPALVDEMALPPCHCLFQFYVADGKLSCQLYQRSADIFLGVPFNIASYALLTMMVAQVTGLEAGDFVHTLGDAHIYRNHFEQAQLQLTRTPKPLPKMEINPAVKDIFSFRFEDFELVGYEADSHIKAPVAV.

DUMP is bound at residue R21. H51 is a (6R)-5,10-methylene-5,6,7,8-tetrahydrofolate binding site. Residue 126-127 coordinates dUMP; sequence RR. The Nucleophile role is filled by C146. DUMP is bound by residues 166-169, N177, and 207-209; these read RSAD and HIY. D169 contributes to the (6R)-5,10-methylene-5,6,7,8-tetrahydrofolate binding site. A263 lines the (6R)-5,10-methylene-5,6,7,8-tetrahydrofolate pocket.

The protein belongs to the thymidylate synthase family. Bacterial-type ThyA subfamily. Homodimer.

It localises to the cytoplasm. It catalyses the reaction dUMP + (6R)-5,10-methylene-5,6,7,8-tetrahydrofolate = 7,8-dihydrofolate + dTMP. Its pathway is pyrimidine metabolism; dTTP biosynthesis. Its function is as follows. Catalyzes the reductive methylation of 2'-deoxyuridine-5'-monophosphate (dUMP) to 2'-deoxythymidine-5'-monophosphate (dTMP) while utilizing 5,10-methylenetetrahydrofolate (mTHF) as the methyl donor and reductant in the reaction, yielding dihydrofolate (DHF) as a by-product. This enzymatic reaction provides an intracellular de novo source of dTMP, an essential precursor for DNA biosynthesis. In Rhizobium meliloti (strain 1021) (Ensifer meliloti), this protein is Thymidylate synthase.